A 459-amino-acid polypeptide reads, in one-letter code: ATP synthase subunit beta 1 (459 aa).

148-155 (GGAGVGKT) contacts ATP.

This sequence belongs to the ATPase alpha/beta chains family. F-type ATPases have 2 components, CF(1) - the catalytic core - and CF(0) - the membrane proton channel. CF(1) has five subunits: alpha(3), beta(3), gamma(1), delta(1), epsilon(1). CF(0) has three main subunits: a(1), b(2) and c(9-12). The alpha and beta chains form an alternating ring which encloses part of the gamma chain. CF(1) is attached to CF(0) by a central stalk formed by the gamma and epsilon chains, while a peripheral stalk is formed by the delta and b chains.

Its subcellular location is the cell inner membrane. It catalyses the reaction ATP + H2O + 4 H(+)(in) = ADP + phosphate + 5 H(+)(out). In terms of biological role, produces ATP from ADP in the presence of a proton gradient across the membrane. The catalytic sites are hosted primarily by the beta subunits. This chain is ATP synthase subunit beta 1, found in Nitrosospira multiformis (strain ATCC 25196 / NCIMB 11849 / C 71).